Consider the following 625-residue polypeptide: Vicilin-like antimicrobial peptides 2-3 (625 aa).

2 disordered regions span residues 120 to 152 (QQKR…QQRE) and 180 to 212 (RQHG…NPYY). Residues 198–212 (RYEEGEEKQSDNPYY) show a composition bias toward basic and acidic residues. 2 consecutive Cupin type-1 domains span residues 230–369 (SVLE…ERLR) and 414–584 (YNLF…KEVE). The segment at 594–614 (IFFPGPRQHQQQSPRSTKQQQ) is disordered. Positions 601–614 (QHQQQSPRSTKQQQ) are enriched in low complexity.

The protein belongs to the 7S seed storage protein family.

It is found in the secreted. Functionally, antimicrobial peptides 2b, 2c and 2d have antibacterial and antifungal activity against a range of species. This is Vicilin-like antimicrobial peptides 2-3 from Macadamia integrifolia (Macadamia nut).